Consider the following 122-residue polypeptide: Large ribosomal subunit protein uL14 (122 aa).

Belongs to the universal ribosomal protein uL14 family. Part of the 50S ribosomal subunit. Forms a cluster with proteins L3 and L19. In the 70S ribosome, L14 and L19 interact and together make contacts with the 16S rRNA in bridges B5 and B8.

In terms of biological role, binds to 23S rRNA. Forms part of two intersubunit bridges in the 70S ribosome. This is Large ribosomal subunit protein uL14 from Mycolicibacterium smegmatis (strain ATCC 700084 / mc(2)155) (Mycobacterium smegmatis).